We begin with the raw amino-acid sequence, 273 residues long: Ribosomal RNA small subunit methyltransferase A (273 aa).

S-adenosyl-L-methionine-binding residues include N18, L20, G45, E66, D91, and N113.

The protein belongs to the class I-like SAM-binding methyltransferase superfamily. rRNA adenine N(6)-methyltransferase family. RsmA subfamily.

The protein localises to the cytoplasm. The enzyme catalyses adenosine(1518)/adenosine(1519) in 16S rRNA + 4 S-adenosyl-L-methionine = N(6)-dimethyladenosine(1518)/N(6)-dimethyladenosine(1519) in 16S rRNA + 4 S-adenosyl-L-homocysteine + 4 H(+). Functionally, specifically dimethylates two adjacent adenosines (A1518 and A1519) in the loop of a conserved hairpin near the 3'-end of 16S rRNA in the 30S particle. May play a critical role in biogenesis of 30S subunits. The sequence is that of Ribosomal RNA small subunit methyltransferase A from Klebsiella pneumoniae (strain 342).